The primary structure comprises 225 residues: Insulin-induced gene 2 protein (225 aa).

Over 1–28 (MAEGETESPGPKKCGPYISSVTSQSVNL) the chain is Cytoplasmic. Residues 29-51 (MIRGVVLFFIGVFLALVLNLLQI) form a helical membrane-spanning segment. At 52-70 (QRNVTLFPPDVIASIFSSA) the chain is on the lumenal side. A helical membrane pass occupies residues 71 to 88 (WWVPPCCGTASAVIGLLY). At 89–103 (PCIDRHLGEPHKFKR) the chain is on the cytoplasmic side. A helical membrane pass occupies residues 104 to 126 (EWSSVMRCVAVFVGINHASAKVD). Residues 127–129 (FDN) lie on the Lumenal side of the membrane. Residues 130–148 (NIQLSLTLAALSIGLWWTF) traverse the membrane as a helical segment. Over 149 to 153 (DRSRS) the chain is Cytoplasmic. Serine 151 carries the post-translational modification Phosphoserine. Residues 154 to 175 (GFGLGVGIAFLATLVTQLLVYN) form a helical membrane-spanning segment. The Lumenal portion of the chain corresponds to 176–189 (GVYQYTSPDFLYVR). The chain crosses the membrane as a helical span at residues 190-207 (SWLPCIFFAGGITMGNIG). At 208-225 (RQLAMYECKVIAEKSHQE) the chain is on the cytoplasmic side. Cysteine 215 bears the Cysteine sulfenic acid (-SOH); alternate mark. Cysteine 215 participates in a covalent cross-link: Glycyl cysteine thioester (Cys-Gly) (interchain with G-Cter in ubiquitin); alternate. A KxHxx motif is present at residues 219 to 225 (AEKSHQE).

It belongs to the INSIG family. In terms of assembly, interacts with SCAP; interaction is direct and only takes place in the presence of sterols; it prevents interaction between SCAP and the coat protein complex II (COPII). Associates with the SCAP-SREBP complex (composed of SCAP and SREBF1/SREBP1 or SREBF2/SREBP2); association is mediated via its interaction with SCAP and only takes place in the presence of sterols. Interacts with RNF139. Interacts with RNF145. In terms of processing, phosphorylation at Ser-151 by PCK1 reduces binding to oxysterol, disrupting the interaction between INSIG2 and SCAP, thereby promoting nuclear translocation of SREBP proteins (SREBF1/SREBP1 or SREBF2/SREBP2) and subsequent transcription of downstream lipogenesis-related genes. Polyubiquitinated by AMFR/gp78 at Cys-215 in some tissues such as adipose tissues, undifferentiated myoblasts and liver, leading to its degradation. In differentiated myotubes, Cys-215 oxidation prevents ubiquitination at the same site, resulting in protein stabilization. Post-translationally, oxidized at Cys-215 in differentiated myotubes, preventing ubiquitination at the same site, and resulting in protein stabilization.

Its subcellular location is the endoplasmic reticulum membrane. In terms of biological role, oxysterol-binding protein that mediates feedback control of cholesterol synthesis by controlling both endoplasmic reticulum to Golgi transport of SCAP and degradation of HMGCR. Acts as a negative regulator of cholesterol biosynthesis by mediating the retention of the SCAP-SREBP complex in the endoplasmic reticulum, thereby blocking the processing of sterol regulatory element-binding proteins (SREBPs) SREBF1/SREBP1 and SREBF2/SREBP2. Binds oxysterol, including 22-hydroxycholesterol, 24-hydroxycholesterol, 25-hydroxycholesterol and 27-hydroxycholesterol, regulating interaction with SCAP and retention of the SCAP-SREBP complex in the endoplasmic reticulum. In presence of oxysterol, interacts with SCAP, retaining the SCAP-SREBP complex in the endoplasmic reticulum, thereby preventing SCAP from escorting SREBF1/SREBP1 and SREBF2/SREBP2 to the Golgi. Sterol deprivation or phosphorylation by PCK1 reduce oxysterol-binding, disrupting the interaction between INSIG2 and SCAP, thereby promoting Golgi transport of the SCAP-SREBP complex, followed by processing and nuclear translocation of SREBF1/SREBP1 and SREBF2/SREBP2. Also regulates cholesterol synthesis by regulating degradation of HMGCR: initiates the sterol-mediated ubiquitin-mediated endoplasmic reticulum-associated degradation (ERAD) of HMGCR via recruitment of the reductase to the ubiquitin ligase RNF139. The polypeptide is Insulin-induced gene 2 protein (Papio anubis (Olive baboon)).